A 1399-amino-acid polypeptide reads, in one-letter code: DNA-directed RNA polymerase subunit beta' (1399 aa).

Residues Cys70, Cys72, Cys85, and Cys88 each contribute to the Zn(2+) site. Positions 460, 462, and 464 each coordinate Mg(2+). Zn(2+)-binding residues include Cys814, Cys888, Cys895, and Cys898. A disordered region spans residues 1367-1399 (SERKRQRDLGKPQRVSASEAEAALTEALNSSGN). Low complexity predominate over residues 1382–1399 (SASEAEAALTEALNSSGN).

This sequence belongs to the RNA polymerase beta' chain family. As to quaternary structure, the RNAP catalytic core consists of 2 alpha, 1 beta, 1 beta' and 1 omega subunit. When a sigma factor is associated with the core the holoenzyme is formed, which can initiate transcription. It depends on Mg(2+) as a cofactor. Zn(2+) is required as a cofactor.

It catalyses the reaction RNA(n) + a ribonucleoside 5'-triphosphate = RNA(n+1) + diphosphate. In terms of biological role, DNA-dependent RNA polymerase catalyzes the transcription of DNA into RNA using the four ribonucleoside triphosphates as substrates. The polypeptide is DNA-directed RNA polymerase subunit beta' (Pseudomonas paraeruginosa (strain DSM 24068 / PA7) (Pseudomonas aeruginosa (strain PA7))).